We begin with the raw amino-acid sequence, 264 residues long: Ribosomal protein L11 methyltransferase (264 aa).

4 residues coordinate S-adenosyl-L-methionine: Thr116, Gly137, Asp159, and Asn200.

This sequence belongs to the methyltransferase superfamily. PrmA family.

It localises to the cytoplasm. The enzyme catalyses L-lysyl-[protein] + 3 S-adenosyl-L-methionine = N(6),N(6),N(6)-trimethyl-L-lysyl-[protein] + 3 S-adenosyl-L-homocysteine + 3 H(+). In terms of biological role, methylates ribosomal protein L11. This chain is Ribosomal protein L11 methyltransferase, found in Thermotoga neapolitana.